Consider the following 220-residue polypeptide: ATP synthase F(0) complex subunit a (220 aa).

The next 6 helical transmembrane spans lie at 12-32, 69-89, 91-111, 130-150, 158-178, and 183-203; these read PTLL…TLLP, WAMI…FTPT, QLSL…LLGL, LLIP…PFAL, LTAG…LLPM, and ALLT…VAMI.

This sequence belongs to the ATPase A chain family. In terms of assembly, component of the ATP synthase complex composed at least of ATP5F1A/subunit alpha, ATP5F1B/subunit beta, ATP5MC1/subunit c (homooctomer), MT-ATP6/subunit a, MT-ATP8/subunit 8, ATP5ME/subunit e, ATP5MF/subunit f, ATP5MG/subunit g, ATP5MK/subunit k, ATP5MJ/subunit j, ATP5F1C/subunit gamma, ATP5F1D/subunit delta, ATP5F1E/subunit epsilon, ATP5PF/subunit F6, ATP5PB/subunit b, ATP5PD/subunit d, ATP5PO/subunit OSCP. ATP synthase complex consists of a soluble F(1) head domain (subunits alpha(3) and beta(3)) - the catalytic core - and a membrane F(0) domain - the membrane proton channel (subunits c, a, 8, e, f, g, k and j). These two domains are linked by a central stalk (subunits gamma, delta, and epsilon) rotating inside the F1 region and a stationary peripheral stalk (subunits F6, b, d, and OSCP). Interacts with DNAJC30; interaction is direct.

The protein resides in the mitochondrion inner membrane. It catalyses the reaction H(+)(in) = H(+)(out). Its function is as follows. Subunit a, of the mitochondrial membrane ATP synthase complex (F(1)F(0) ATP synthase or Complex V) that produces ATP from ADP in the presence of a proton gradient across the membrane which is generated by electron transport complexes of the respiratory chain. ATP synthase complex consist of a soluble F(1) head domain - the catalytic core - and a membrane F(1) domain - the membrane proton channel. These two domains are linked by a central stalk rotating inside the F(1) region and a stationary peripheral stalk. During catalysis, ATP synthesis in the catalytic domain of F(1) is coupled via a rotary mechanism of the central stalk subunits to proton translocation. With the subunit c (ATP5MC1), forms the proton-conducting channel in the F(0) domain, that contains two crucial half-channels (inlet and outlet) that facilitate proton movement from the mitochondrial intermembrane space (IMS) into the matrix. Protons are taken up via the inlet half-channel and released through the outlet half-channel, following a Grotthuss mechanism. This Latimeria chalumnae (Coelacanth) protein is ATP synthase F(0) complex subunit a.